The primary structure comprises 163 residues: Phosphopantetheine adenylyltransferase (163 aa).

T11 is a substrate binding site. Residues 11-12 (TF) and H19 contribute to the ATP site. Positions 43, 75, and 89 each coordinate substrate. Residues 90 to 92 (GLR), E100, and 125 to 131 (YMFISAT) each bind ATP.

It belongs to the bacterial CoaD family. Homohexamer. Mg(2+) serves as cofactor.

The protein localises to the cytoplasm. The enzyme catalyses (R)-4'-phosphopantetheine + ATP + H(+) = 3'-dephospho-CoA + diphosphate. Its pathway is cofactor biosynthesis; coenzyme A biosynthesis; CoA from (R)-pantothenate: step 4/5. In terms of biological role, reversibly transfers an adenylyl group from ATP to 4'-phosphopantetheine, yielding dephospho-CoA (dPCoA) and pyrophosphate. In Aromatoleum aromaticum (strain DSM 19018 / LMG 30748 / EbN1) (Azoarcus sp. (strain EbN1)), this protein is Phosphopantetheine adenylyltransferase.